We begin with the raw amino-acid sequence, 650 residues long: ATP-dependent DNA helicase PIF1 (650 aa).

The interval 14-192 (MPSSTEAATD…ALEKRPMESQ (179 aa)) is PINT. Phosphoserine is present on residues Ser-40 and Ser-164. Residues 171–199 (LQRAAATKAPDSALEKRPMESQTSTEAPR) are disordered. 237–244 (GSAGTGKS) lines the ATP pocket. Residues 586-605 (QAYVALSRARSLQGLRVLDF) mediate DNA binding. The tract at residues 631–650 (LESQDDEEANSDLENMDPNL) is disordered. Residues 633–650 (SQDDEEANSDLENMDPNL) are compositionally biased toward acidic residues.

Belongs to the helicase family. PIF1 subfamily. Monomer. Interacts with telomerase. Mg(2+) is required as a cofactor.

The protein resides in the nucleus. Its subcellular location is the mitochondrion. It catalyses the reaction Couples ATP hydrolysis with the unwinding of duplex DNA at the replication fork by translocating in the 5'-3' direction. This creates two antiparallel DNA single strands (ssDNA). The leading ssDNA polymer is the template for DNA polymerase III holoenzyme which synthesizes a continuous strand.. It carries out the reaction ATP + H2O = ADP + phosphate + H(+). DNA-dependent ATPase and 5'-3' DNA helicase required for the maintenance of both mitochondrial and nuclear genome stability. Efficiently unwinds G-quadruplex (G4) DNA structures and forked RNA-DNA hybrids. Resolves G4 structures, preventing replication pausing and double-strand breaks (DSBs) at G4 motifs. Involved in the maintenance of telomeric DNA. Inhibits telomere elongation, de novo telomere formation and telomere addition to DSBs via catalytic inhibition of telomerase. Reduces the processivity of telomerase by displacing active telomerase from DNA ends. Releases telomerase by unwinding the short telomerase RNA/telomeric DNA hybrid that is the intermediate in the telomerase reaction. Possesses an intrinsic strand annealing activity. This is ATP-dependent DNA helicase PIF1 from Mus musculus (Mouse).